We begin with the raw amino-acid sequence, 205 residues long: uncharacterized protein (205 aa).

Transmembrane regions (helical) follow at residues 4 to 24 (LAFL…AIDD), 105 to 125 (KWFI…LWIL), 130 to 150 (FLLF…KIPN), 151 to 171 (WLFN…VPEC), and 182 to 202 (ITIP…KFII).

Its subcellular location is the cell membrane. This is an uncharacterized protein from Methanocaldococcus jannaschii (strain ATCC 43067 / DSM 2661 / JAL-1 / JCM 10045 / NBRC 100440) (Methanococcus jannaschii).